A 622-amino-acid polypeptide reads, in one-letter code: Palmitoyltransferase ZDHHC13 (622 aa).

Met-1 bears the N-acetylmethionine mark. Over 1–291 the chain is Cytoplasmic; that stretch reads MEGPGLGSQC…RLWRWLQKCE (291 aa). ANK repeat units lie at residues 43 to 78, 81 to 110, 115 to 144, 148 to 177, 181 to 211, 216 to 245, and 249 to 277; these read PLIEDSSNCDIVKATQYGIFERCKELVEAGYDVRQP, ENVSLLHWAAINNRLDLVKFYISKGAVVDQ, LNSTPLHWAIRQGHLPMVILLLQHGADPTL, EGFSSIHLAVLFQHMPIIAYLISKGQSVNM, NGQTPLMLSAHKVIGPEPTGFLLKFNPSLNV, HQNTPLHWAVAAGNVNAVDKLLEAGSSLDI, and KGETPLDMALQNKNQLIIHMLKTEAKMRA. Residues 292–312 traverse the membrane as a helical segment; that stretch reads LFLLLMLSVITMWAVGYILDF. At 313–320 the chain is on the lumenal side; sequence NSDSWLLK. Residues 321 to 341 form a helical membrane-spanning segment; it reads GCLLVTLFFLTSLFPRFLVGY. Topologically, residues 342–347 are cytoplasmic; sequence KNLVYL. Residues 348–368 traverse the membrane as a helical segment; the sequence is PTAFLLSSVFWIFMTWFILFF. Residues 369-370 are Lumenal-facing; it reads PD. A helical membrane pass occupies residues 371–391; it reads LAGAPFYFSFIFSIVAFLYFF. The Cytoplasmic segment spans residues 392-470; the sequence is YKTWATDPGF…RCIGFGNHHY (79 aa). A DHHC domain is found at 426-476; sequence TFCTSCLIRKPLRSLHCHVCNSCVARYDQHCLWTGRCIGFGNHHYYIFFLF. The active-site S-palmitoyl cysteine intermediate is Cys-456. A helical membrane pass occupies residues 471–491; that stretch reads YIFFLFFLSMVCGWIIYGSFI. The Lumenal segment spans residues 492-518; the sequence is YWSSHCATTFKEDGLWTYLNQIVACSP. Residues 519–539 traverse the membrane as a helical segment; the sequence is WVLYILMLATFHFSWSTFLLL. Residues 540 to 622 lie on the Cytoplasmic side of the membrane; sequence NQLFQIAFLG…PAREKVLRSV (83 aa).

It belongs to the DHHC palmitoyltransferase family. AKR/ZDHHC17 subfamily. As to quaternary structure, interacts (via ANK repeats) with CLIP3. Interacts (via ANK repeats) with DNAJC5 (via C-terminus). Interacts (via ANK repeats) with HTT. Interacts (via ANK repeats) with MAP6. Interacts (via ANK repeats) with SNAP23. Interacts (via ANK repeats) with SNAP25. May interact (via ANK repeats) with SPRED2.

The protein localises to the golgi apparatus membrane. It localises to the cytoplasmic vesicle membrane. It catalyses the reaction L-cysteinyl-[protein] + hexadecanoyl-CoA = S-hexadecanoyl-L-cysteinyl-[protein] + CoA. Its function is as follows. Palmitoyltransferase that could catalyze the addition of palmitate onto various protein substrates. Palmitoyltransferase for HTT and GAD2. May play a role in Mg(2+) transport. In Pongo abelii (Sumatran orangutan), this protein is Palmitoyltransferase ZDHHC13.